We begin with the raw amino-acid sequence, 1081 residues long: WD repeat-containing protein 64 (1081 aa).

WD repeat units follow at residues Asp-102–Lys-152, Gly-153–Gln-198, Glu-199–Ser-265, Lys-266–Asn-314, Leu-315–Thr-356, Lys-357–Leu-400, Leu-401–Ile-444, Gln-445–Leu-488, Gln-489–Gly-532, Gln-533–Glu-631, Arg-632–Ser-740, Lys-741–Leu-803, Leu-804–Phe-857, and Lys-858–His-895. The segment covering Cys-726 to Gln-745 has biased composition (low complexity). Positions Cys-726–Thr-757 are disordered. Positions Ser-746–Gln-756 are enriched in basic and acidic residues. Positions Asp-1036–Ser-1060 are disordered. Residues Gly-1043–Ser-1060 show a composition bias toward basic residues.

This is WD repeat-containing protein 64 (WDR64) from Homo sapiens (Human).